A 199-amino-acid polypeptide reads, in one-letter code: Patulin biosynthesis cluster protein F (199 aa).

Residues 1–21 (MKSSLWVSLAVSLIGLGPAAA) form the signal peptide. Residues Asn129 and Asn183 are each glycosylated (N-linked (GlcNAc...) asparagine).

This sequence belongs to the patF family.

The protein localises to the cytoplasm. The protein resides in the cytosol. The catalysed reaction is phyllostine = neopatulin. It participates in mycotoxin biosynthesis; patulin biosynthesis. Functionally, part of the gene cluster that mediates the biosynthesis of patulin, an acetate-derived tetraketide mycotoxin produced by several fungal species that shows antimicrobial properties against several bacteria. PatF catalyzes the conversion of phyllostine into neopatulin. The pathway begins with the synthesis of 6-methylsalicylic acid by the polyketide synthase (PKS) patK via condensation of acetate and malonate units. The 6-methylsalicylic acid decarboxylase patG then catalyzes the decarboxylation of 6-methylsalicylic acid to yield m-cresol (also known as 3-methylphenol). These first reactions occur in the cytosol. The intermediate m-cresol is then transported into the endoplasmic reticulum where the cytochrome P450 monooxygenase patH converts it to m-hydroxybenzyl alcohol, which is further converted to gentisyl alcohol by the cytochrome P450 monooxygenase patI. The oxidoreductases patJ and patO further convert gentisyl alcohol to isoepoxydon in the vacuole. PatN catalyzes then the transformation of isoepoxydon into phyllostine. The cluster protein patF is responsible for the conversion from phyllostine to neopatulin whereas the alcohol dehydrogenase patD converts neopatulin to E-ascladiol. The steps between isoepoxydon and E-ascladiol occur in the cytosol, and E-ascladiol is probably secreted to the extracellular space by one of the cluster-specific transporters patC or patM. Finally, the secreted patulin synthase patE catalyzes the conversion of E-ascladiol to patulin. The sequence is that of Patulin biosynthesis cluster protein F from Penicillium expansum (Blue mold rot fungus).